Reading from the N-terminus, the 506-residue chain is MKEYQVYLERSRSRQQDFLYPLLFREYIYGLAYSHHFHRSIFLENVGYDNKYSLLIVKRLITRMYQQNHLIISANDSPKNPFWGYNKNLDCQIISEGFAIVVEIPFFRQLSSSFEEAEILKSFKNLRSIHSIFPFLEDKFTYLNYVSDIRIPYPIHLEILVQILRYWVKDAPFFHLLRLFLYHFCNWNSFISTKKWISTFSKSNPRLFLFLHNFYVCEYEYILVFLRNKSSHLGFKSFSIFFERIFFYGKREHLGKVFAKDFSYPLTFFKDPNIHYVRYQGKCILASKNAPFLMNKWKHYFIHLWQCFFDVWSQPRMININPLSEHSFQLLGYFSNVRLNRSVVRSQMLQNTFLIEIVIKKLDIIVPIIPLIRSLAKAKFCNVLGEPISKPVWADSSDFDIIDRFLRICRNLSHYYNGSSKKKSLYRIKYILRLSCIKTLACKHKSTVRAFLKRSGSEELLQEFFTEEEEIISLIFPRDSSTLQRLHRNRIWYLDILFSNDLVHDE.

This sequence belongs to the intron maturase 2 family. MatK subfamily.

It localises to the plastid. It is found in the chloroplast. Functionally, usually encoded in the trnK tRNA gene intron. Probably assists in splicing its own and other chloroplast group II introns. In Pisum sativum (Garden pea), this protein is Maturase K.